We begin with the raw amino-acid sequence, 460 residues long: 25S rRNA (cytosine-C(5))-methyltransferase rcm1 (460 aa).

Residues 223–229 (CAAPGNK), E246, D273, and D293 contribute to the S-adenosyl-L-methionine site. Residue C350 is the Nucleophile of the active site. Residues 430–439 (KMYKNDDDTK) show a composition bias toward basic and acidic residues. Positions 430 to 460 (KMYKNDDDTKKRKRKKKKKEVKKKARIQGEE) are disordered. Positions 440 to 460 (KRKRKKKKKEVKKKARIQGEE) are enriched in basic residues.

It belongs to the class I-like SAM-binding methyltransferase superfamily. RsmB/NOP family. In terms of assembly, interacts with trm112.

The protein resides in the nucleus. It localises to the nucleolus. It carries out the reaction a cytidine in 25S rRNA + S-adenosyl-L-methionine = a 5-methylcytidine in 25S rRNA + S-adenosyl-L-homocysteine + H(+). S-adenosyl-L-methionine-dependent methyltransferase that specifically methylates the C(5) position of a cytosine in 25S rRNA. This chain is 25S rRNA (cytosine-C(5))-methyltransferase rcm1 (rcm1), found in Schizosaccharomyces pombe (strain 972 / ATCC 24843) (Fission yeast).